We begin with the raw amino-acid sequence, 431 residues long: Adenylosuccinate synthetase (431 aa).

Residues Gly13–Lys19 and Gly41–Thr43 contribute to the GTP site. Asp14 acts as the Proton acceptor in catalysis. Asp14 and Gly41 together coordinate Mg(2+). IMP contacts are provided by residues Asp14–Lys17, Asn39–His42, Thr130, Arg144, Gln225, Thr240, and Arg304. Catalysis depends on His42, which acts as the Proton donor. Ala300 to Arg306 is a binding site for substrate. Residues Arg306, Lys332–Asp334, and Ser415–Gly417 contribute to the GTP site.

It belongs to the adenylosuccinate synthetase family. In terms of assembly, homodimer. The cofactor is Mg(2+).

Its subcellular location is the cytoplasm. It carries out the reaction IMP + L-aspartate + GTP = N(6)-(1,2-dicarboxyethyl)-AMP + GDP + phosphate + 2 H(+). The protein operates within purine metabolism; AMP biosynthesis via de novo pathway; AMP from IMP: step 1/2. Plays an important role in the de novo pathway of purine nucleotide biosynthesis. Catalyzes the first committed step in the biosynthesis of AMP from IMP. The chain is Adenylosuccinate synthetase from Shewanella frigidimarina (strain NCIMB 400).